Consider the following 397-residue polypeptide: Putative teichuronic acid biosynthesis glycosyltransferase TuaH (397 aa).

The protein belongs to the glycosyltransferase group 1 family.

It participates in cell wall biogenesis; teichuronic acid biosynthesis. The chain is Putative teichuronic acid biosynthesis glycosyltransferase TuaH (tuaH) from Bacillus subtilis (strain 168).